Reading from the N-terminus, the 282-residue chain is Para-Rep C1 (282 aa).

A CRESS-DNA virus Rep endonuclease domain is found at 1-99; sequence MASKRWCFTL…ETLISEIGAP (99 aa). Residues 7-10 carry the RCR-1 motif; sequence CFTL. A divalent metal cation contacts are provided by E38 and H47. The short motif at 47–49 is the RCR-2 element; the sequence is HLQ. The Nuclear localization signal signature appears at 56–77; that stretch reads KMIRLGGLKKKFGYRAHWEIAK. Catalysis depends on Y86, which acts as the For DNA cleavage activity. An RCR-3 motif is present at residues 86 to 89; sequence YCTK. A divalent metal cation is bound at residue S94. Residue 174 to 182 participates in ATP binding; the sequence is GSDGGEGKS.

It belongs to the nanoviridea/circoviridae replication-associated protein family. As to quaternary structure, homooligomer (Potential). Rep binds to repeated DNA motifs (iterons). Mg(2+) serves as cofactor. The cofactor is Mn(2+).

It localises to the host nucleus. The catalysed reaction is ATP + H2O = ADP + phosphate + H(+). Initiates and terminates the replication only of its own subviral DNA molecule. The closed circular ssDNA genome is first converted to a superhelical dsDNA. Rep binds a specific hairpin at the genome origin of replication. Introduces an endonucleolytic nick within the intergenic region of the genome, thereby initiating the rolling circle replication (RCR). Following cleavage, binds covalently to the 5'-phosphate of DNA as a tyrosyl ester. The cleavage gives rise to a free 3'-OH that serves as a primer for the cellular DNA polymerase. The polymerase synthesizes the (+) strand DNA by rolling circle mechanism. After one round of replication, a Rep-catalyzed nucleotidyl transfer reaction releases a circular single-stranded virus genome, thereby terminating the replication. Displays origin-specific DNA cleavage, nucleotidyl transferase, ATPase and helicase activities. The sequence is that of Para-Rep C1 (C1) from Faba bean necrotic yellows C11 alphasatellite (FBNYC11A).